The primary structure comprises 48 residues: Protein PsbN (48 aa).

The helical transmembrane segment at 12-34 (LLIAMVTITFGLTGYGLYTAFGP) threads the bilayer.

It belongs to the PsbN family.

Its subcellular location is the cellular thylakoid membrane. In terms of biological role, may play a role in photosystem I and II biogenesis. This is Protein PsbN from Prochlorococcus marinus (strain MIT 9313).